A 155-amino-acid polypeptide reads, in one-letter code: MNPPAWPASRLFQPVDTVQTLELPRNELLETAMTNSGMQLAGGGVHRTKDIKPEDLVGRGIQLNSYQPPTTRLKPERVFQLAGGSRSSFNPSINTLLTLQPAASVPRSGGIGEVQFVHEFVPSVYFQPFSGPPGSYPDEFIYNFDVATDSIDGYA.

Positions 44–84 are excised as a propeptide; it reads GVHRTKDIKPEDLVGRGIQLNSYQPPTTRLKPERVFQLAGG.

Belongs to the adenoviridae hexon-linking protein family. As to quaternary structure, interacts with the peripentonal hexons as well as the hexons in the facets. Part of a complex composed of the core-capsid bridging protein, the endosome lysis protein VI and the hexon-linking protein VIII; these interactions bridge the virus core to the capsid. In terms of processing, cleaved by the viral protease during virion maturation. May cause the middle segment to be shed from the capsid.

It localises to the virion. The protein resides in the host nucleus. Functionally, structural component of the virion that acts as a cement protein on the capsid interior and which glue the peripentonal hexons and group-of-nine hexons together. The chain is Pre-hexon-linking protein VIII from Bos taurus (Bovine).